The chain runs to 354 residues: Nicotinate-nucleotide--dimethylbenzimidazole phosphoribosyltransferase (354 aa).

Residue Glu313 is the Proton acceptor of the active site.

Belongs to the CobT family.

The catalysed reaction is 5,6-dimethylbenzimidazole + nicotinate beta-D-ribonucleotide = alpha-ribazole 5'-phosphate + nicotinate + H(+). Its pathway is nucleoside biosynthesis; alpha-ribazole biosynthesis; alpha-ribazole from 5,6-dimethylbenzimidazole: step 1/2. Its function is as follows. Catalyzes the synthesis of alpha-ribazole-5'-phosphate from nicotinate mononucleotide (NAMN) and 5,6-dimethylbenzimidazole (DMB). The chain is Nicotinate-nucleotide--dimethylbenzimidazole phosphoribosyltransferase from Ralstonia nicotianae (strain ATCC BAA-1114 / GMI1000) (Ralstonia solanacearum).